The sequence spans 637 residues: tRNA uridine 5-carboxymethylaminomethyl modification enzyme MnmG (637 aa).

FAD-binding positions include 15–20 (GAGHAG), I127, and S182. 276 to 290 (GPRYCPSIEDKIVRF) serves as a coordination point for NAD(+). Position 373 (Q373) interacts with FAD.

It belongs to the MnmG family. As to quaternary structure, homodimer. Heterotetramer of two MnmE and two MnmG subunits. FAD serves as cofactor.

It localises to the cytoplasm. Functionally, NAD-binding protein involved in the addition of a carboxymethylaminomethyl (cmnm) group at the wobble position (U34) of certain tRNAs, forming tRNA-cmnm(5)s(2)U34. In Streptococcus pneumoniae (strain Hungary19A-6), this protein is tRNA uridine 5-carboxymethylaminomethyl modification enzyme MnmG.